The following is a 78-amino-acid chain: NAD(P)H-quinone oxidoreductase subunit O (78 aa).

It belongs to the complex I NdhO subunit family. As to quaternary structure, NDH-1 can be composed of about 15 different subunits; different subcomplexes with different compositions have been identified which probably have different functions.

The protein resides in the cellular thylakoid membrane. The catalysed reaction is a plastoquinone + NADH + (n+1) H(+)(in) = a plastoquinol + NAD(+) + n H(+)(out). The enzyme catalyses a plastoquinone + NADPH + (n+1) H(+)(in) = a plastoquinol + NADP(+) + n H(+)(out). Functionally, NDH-1 shuttles electrons from an unknown electron donor, via FMN and iron-sulfur (Fe-S) centers, to quinones in the respiratory and/or the photosynthetic chain. The immediate electron acceptor for the enzyme in this species is believed to be plastoquinone. Couples the redox reaction to proton translocation, and thus conserves the redox energy in a proton gradient. Cyanobacterial NDH-1 also plays a role in inorganic carbon-concentration. The polypeptide is NAD(P)H-quinone oxidoreductase subunit O (Prochlorococcus marinus (strain MIT 9301)).